The following is a 297-amino-acid chain: Protoheme IX farnesyltransferase (297 aa).

9 helical membrane passes run 23–43, 49–69, 90–110, 117–137, 144–164, 171–191, 215–235, 238–258, and 277–297; these read VTQL…PGLP, VFGT…NCLI, ISAA…MLVL, LTMW…TVIL, NIVI…AAVA, AWVL…ALAL, RLHI…PYII, SGLL…AYAW, and ILYL…GLLA.

The protein belongs to the UbiA prenyltransferase family. Protoheme IX farnesyltransferase subfamily.

It localises to the cell inner membrane. The enzyme catalyses heme b + (2E,6E)-farnesyl diphosphate + H2O = Fe(II)-heme o + diphosphate. It participates in porphyrin-containing compound metabolism; heme O biosynthesis; heme O from protoheme: step 1/1. Converts heme B (protoheme IX) to heme O by substitution of the vinyl group on carbon 2 of heme B porphyrin ring with a hydroxyethyl farnesyl side group. This Bordetella petrii (strain ATCC BAA-461 / DSM 12804 / CCUG 43448) protein is Protoheme IX farnesyltransferase.